The sequence spans 222 residues: Tegument protein UL26 (222 aa).

This sequence belongs to the herpesviridae US22 family. In terms of assembly, interacts with UL25. Interacts with ISGylation machinery components ISG15, UBA7 and HERC5; these interactions inhibit global protein ISGylation. In terms of processing, ISGylated; ISGylation regulates UL26 stability and inhibits its activities to suppress NF-kappa-B signaling.

It localises to the virion tegument. The protein localises to the host nucleus. Functionally, plays a role in the inhibition of host NF-kappa-B. This inhibition affects both the canonical and the non-canonical pathways. Blocks the induction of host IKK phosphorylation. May also influence the normal phosphorylation state of several tegument proteins including pp28 in virions. Also suppresses virus-induced ISGylation independent of its own ISGylation. The sequence is that of Tegument protein UL26 (UL26) from Homo sapiens (Human).